We begin with the raw amino-acid sequence, 148 residues long: Snaclec B1 (148 aa).

Positions 1–24 (MGRIIFVSFGLLVVFLSLSGTGAA) are cleaved as a signal peptide. 3 disulfides stabilise this stretch: Cys-27–Cys-38, Cys-55–Cys-144, and Cys-121–Cys-136. Residues 34 to 145 (YDQHCYKVFD…CRLLGHFVCK (112 aa)) form the C-type lectin domain.

It belongs to the snaclec family. Heterodimer; disulfide-linked. As to expression, expressed by the venom gland.

It localises to the secreted. Its function is as follows. Interferes with one step of hemostasis (modulation of platelet aggregation, or coagulation cascade, for example). The sequence is that of Snaclec B1 from Macrovipera lebetinus (Levantine viper).